The following is a 432-amino-acid chain: MGQSVVILGTQWGDEGKGKIVDLLTDKAQFVVRYQGGHNAGHTLVIDGKKTVLHLIPSGILRDNCKCIIGNGVVLAPDALLKEMNELESSGYPVRDRLFLSEACPLILPYHVALDKARELARGNKAIGTTGRGIGPAYEDKVARRGLRVGDLFNMDTFAEKLKEVMTYHNFQLTQFYGVEAVSYEDVLAAVKEYASLLISMVVDVTEMLDQARKRGDKIMFEGAQGTLLDIDHGTYPYVTSSNTTAGGVATGSGYGPRFVEYVLGIAKAYTTRVGGGPFPTELFDDVGENLCARGHEYGATTGRKRRCGWFDAVAMKRAIQINSISGFCLTKLDVLDGLDEVKICIGYKGEDGTVRDVPPMAADGYDLVTPVYESMPGWKENTFGVKSIADLPQAAINYIHRIEAITGVPIDIISTGPDRDETMILRHPFAD.

GTP is bound by residues 13–19 (GDEGKGK) and 41–43 (GHT). Aspartate 14 functions as the Proton acceptor in the catalytic mechanism. Residues aspartate 14 and glycine 41 each coordinate Mg(2+). Residues 14–17 (DEGK), 39–42 (NAGH), threonine 130, arginine 144, glutamine 225, threonine 240, and arginine 304 contribute to the IMP site. Histidine 42 acts as the Proton donor in catalysis. 300–306 (ATTGRKR) is a binding site for substrate. Residues arginine 306, 332–334 (KLD), and 415–417 (STG) contribute to the GTP site.

Belongs to the adenylosuccinate synthetase family. In terms of assembly, homodimer. Requires Mg(2+) as cofactor.

Its subcellular location is the cytoplasm. The catalysed reaction is IMP + L-aspartate + GTP = N(6)-(1,2-dicarboxyethyl)-AMP + GDP + phosphate + 2 H(+). The protein operates within purine metabolism; AMP biosynthesis via de novo pathway; AMP from IMP: step 1/2. Functionally, plays an important role in the de novo pathway of purine nucleotide biosynthesis. Catalyzes the first committed step in the biosynthesis of AMP from IMP. In Tolumonas auensis (strain DSM 9187 / NBRC 110442 / TA 4), this protein is Adenylosuccinate synthetase.